A 1670-amino-acid chain; its full sequence is Protein TASOR (1670 aa).

Residues 1–110 form a disordered region; that stretch reads MATAVETEAC…QIPRKSREKK (110 aa). Ala-2 carries the N-acetylalanine modification. Polar residues predominate over residues 67–78; that stretch reads QSLSHEQPQDSS. Ser-344 carries the phosphoserine modification. A Glycyl lysine isopeptide (Lys-Gly) (interchain with G-Cter in SUMO2) cross-link involves residue Lys-586. Phosphoserine occurs at positions 633, 636, 673, and 800. Glycyl lysine isopeptide (Lys-Gly) (interchain with G-Cter in SUMO2) cross-links involve residues Lys-823 and Lys-832. At Ser-843 the chain carries Phosphoserine. Residue Lys-872 forms a Glycyl lysine isopeptide (Lys-Gly) (interchain with G-Cter in SUMO2) linkage. Residues 921-947 are disordered; sequence TGGNARSPEDQLGKHGEKQTPGMKSPE. Phosphoserine is present on residues Ser-927, Ser-971, and Ser-979. Positions 927–938 are enriched in basic and acidic residues; the sequence is SPEDQLGKHGEK. Residues Thr-982 and Thr-1049 each carry the phosphothreonine modification. The residue at position 1103 (Ser-1103) is a Phosphoserine. Positions 1532–1545 are enriched in basic and acidic residues; it reads ETKGSRGTDQKKNT. 2 disordered regions span residues 1532 to 1558 and 1638 to 1670; these read ETKG…VQNS and FLSA…SQEK. Polar residues-rich tracts occupy residues 1546–1558 and 1659–1670; these read QIEL…VQNS and KSDSSRPYSQEK. Phosphoserine is present on Ser-1552.

It belongs to the TASOR family. As to quaternary structure, component of the HUSH complex; at least composed of TASOR, PPHLN1 and MPHOSPH8. Interacts with MORC2; the interaction associateS MORC2 with the HUSH complex which recruits MORC2 to heterochromatic loci. Interacts with ZNF638; leading to recruitment of the HUSH complex to unintegrated retroviral DNA. Interacts with INPP5A, EML1, SV1L, GPSM2, ITGB3BP, CNTN1, ETFA, PSMD8, S100A10, MPHOSPH8, TMEM100, ALB, PARPBP, HCFC2, NCBP1 and SETDB1.

It localises to the nucleus. Its subcellular location is the chromosome. Functionally, component of the HUSH complex, a multiprotein complex that mediates epigenetic repression. The HUSH complex is recruited to genomic loci rich in H3K9me3 and is required to maintain transcriptional silencing by promoting recruitment of SETDB1, a histone methyltransferase that mediates further deposition of H3K9me3, as well as MORC2. Also represses L1 retrotransposons in collaboration with MORC2 and, probably, SETDB1, the silencing is dependent of repressive epigenetic modifications, such as H3K9me3 mark. Silencing events often occur within introns of transcriptionally active genes, and lead to the down-regulation of host gene expression. The HUSH complex is also involved in the silencing of unintegrated retroviral DNA by being recruited by ZNF638: some part of the retroviral DNA formed immediately after infection remains unintegrated in the host genome and is transcriptionally repressed. Plays a crucial role in early embryonic development. Involved in the organization of spindle poles and spindle apparatus assembly during zygotic division. Plays an important role in maintaining epiblast fitness or potency. This Homo sapiens (Human) protein is Protein TASOR.